Consider the following 319-residue polypeptide: Biotin synthase (319 aa).

A Radical SAM core domain is found at 41 to 267 (YKGNKVKVCS…TPDIMICGGR (227 aa)). Positions 59, 63, and 66 each coordinate [4Fe-4S] cluster. C192 is a [2Fe-2S] cluster binding site.

Belongs to the radical SAM superfamily. Biotin synthase family. As to quaternary structure, homodimer. Requires [4Fe-4S] cluster as cofactor. The cofactor is [2Fe-2S] cluster.

It catalyses the reaction (4R,5S)-dethiobiotin + (sulfur carrier)-SH + 2 reduced [2Fe-2S]-[ferredoxin] + 2 S-adenosyl-L-methionine = (sulfur carrier)-H + biotin + 2 5'-deoxyadenosine + 2 L-methionine + 2 oxidized [2Fe-2S]-[ferredoxin]. The protein operates within cofactor biosynthesis; biotin biosynthesis; biotin from 7,8-diaminononanoate: step 2/2. Its function is as follows. Catalyzes the conversion of dethiobiotin (DTB) to biotin by the insertion of a sulfur atom into dethiobiotin via a radical-based mechanism. This Endomicrobium trichonymphae protein is Biotin synthase.